Consider the following 167-residue polypeptide: Interferon gamma (167 aa).

Positions 1 to 23 (MNYTSFIFAFQLCIILCSSGYYC) are cleaved as a signal peptide. At Gln-24 the chain carries Pyrrolidone carboxylic acid. Asn-39 and Asn-107 each carry an N-linked (GlcNAc...) asparagine glycan.

It belongs to the type II (or gamma) interferon family. As to quaternary structure, homodimer. Interacts with IFNGR1 (via extracellular domain); this interaction promotes IFNGR1 dimerization. Released primarily from activated T lymphocytes.

The protein resides in the secreted. In terms of biological role, type II interferon produced by immune cells such as T-cells and NK cells that plays crucial roles in antimicrobial, antiviral, and antitumor responses by activating effector immune cells and enhancing antigen presentation. Primarily signals through the JAK-STAT pathway after interaction with its receptor IFNGR1 to affect gene regulation. Upon IFNG binding, IFNGR1 intracellular domain opens out to allow association of downstream signaling components JAK2, JAK1 and STAT1, leading to STAT1 activation, nuclear translocation and transcription of IFNG-regulated genes. Many of the induced genes are transcription factors such as IRF1 that are able to further drive regulation of a next wave of transcription. Plays a role in class I antigen presentation pathway by inducing a replacement of catalytic proteasome subunits with immunoproteasome subunits. In turn, increases the quantity, quality, and repertoire of peptides for class I MHC loading. Increases the efficiency of peptide generation also by inducing the expression of activator PA28 that associates with the proteasome and alters its proteolytic cleavage preference. Up-regulates as well MHC II complexes on the cell surface by promoting expression of several key molecules such as cathepsins B/CTSB, H/CTSH, and L/CTSL. Participates in the regulation of hematopoietic stem cells during development and under homeostatic conditions by affecting their development, quiescence, and differentiation. This chain is Interferon gamma (IFNG), found in Felis catus (Cat).